An 85-amino-acid polypeptide reads, in one-letter code: Large ribosomal subunit protein bL27 (85 aa).

Residues 1 to 21 (MAHKKGVGSSRNGRDSDGQRL) form a disordered region.

This sequence belongs to the bacterial ribosomal protein bL27 family.

The chain is Large ribosomal subunit protein bL27 from Citrifermentans bemidjiense (strain ATCC BAA-1014 / DSM 16622 / JCM 12645 / Bem) (Geobacter bemidjiensis).